A 308-amino-acid polypeptide reads, in one-letter code: Putative S-adenosyl-L-methionine-dependent methyltransferase MAB_4584c (308 aa).

S-adenosyl-L-methionine contacts are provided by residues Asp-131 and 160-161 (DL).

Belongs to the UPF0677 family.

Functionally, exhibits S-adenosyl-L-methionine-dependent methyltransferase activity. This is Putative S-adenosyl-L-methionine-dependent methyltransferase MAB_4584c from Mycobacteroides abscessus (strain ATCC 19977 / DSM 44196 / CCUG 20993 / CIP 104536 / JCM 13569 / NCTC 13031 / TMC 1543 / L948) (Mycobacterium abscessus).